The chain runs to 156 residues: MKFLVYAVGHKMPEWIAAGFQEYAKRMPREANIELLEIKPERRDSGKKVEQLLAAEGARIRALLPSNCRLVVMDERGSQWTTAGLAHAIGSWMKDGGDTAFLIGGADGLDPALRNAADEVLALSALTLPHGLVRILLAEQLYRAISLIKGHPYHRA.

S-adenosyl-L-methionine is bound by residues Gly-104 and 123 to 128; that span reads LSALTL.

It belongs to the RNA methyltransferase RlmH family. In terms of assembly, homodimer.

The protein localises to the cytoplasm. The catalysed reaction is pseudouridine(1915) in 23S rRNA + S-adenosyl-L-methionine = N(3)-methylpseudouridine(1915) in 23S rRNA + S-adenosyl-L-homocysteine + H(+). In terms of biological role, specifically methylates the pseudouridine at position 1915 (m3Psi1915) in 23S rRNA. This is Ribosomal RNA large subunit methyltransferase H from Nitrosospira multiformis (strain ATCC 25196 / NCIMB 11849 / C 71).